Reading from the N-terminus, the 157-residue chain is Protein Smg homolog (157 aa).

It belongs to the Smg family.

The sequence is that of Protein Smg homolog from Shewanella halifaxensis (strain HAW-EB4).